Consider the following 218-residue polypeptide: GTP cyclohydrolase 1 (218 aa).

Residues C109, H112, and C180 each contribute to the Zn(2+) site.

This sequence belongs to the GTP cyclohydrolase I family. In terms of assembly, toroid-shaped homodecamer, composed of two pentamers of five dimers.

It carries out the reaction GTP + H2O = 7,8-dihydroneopterin 3'-triphosphate + formate + H(+). It participates in cofactor biosynthesis; 7,8-dihydroneopterin triphosphate biosynthesis; 7,8-dihydroneopterin triphosphate from GTP: step 1/1. This is GTP cyclohydrolase 1 from Actinobacillus pleuropneumoniae serotype 5b (strain L20).